Consider the following 164-residue polypeptide: Large ribosomal subunit protein uL23 (164 aa).

The disordered stretch occupies residues Met1–Val41.

Belongs to the universal ribosomal protein uL23 family.

Functionally, this protein binds to a specific region on the 26S rRNA. This is Large ribosomal subunit protein uL23 (RPL23A) from Trypanosoma brucei brucei.